A 363-amino-acid polypeptide reads, in one-letter code: 3-isopropylmalate dehydrogenase (363 aa).

78–91 (GPKWEHLPPDQQPE) provides a ligand contact to NAD(+). Positions 99, 109, 138, and 227 each coordinate substrate. Mg(2+) contacts are provided by Asp-227, Asp-251, and Asp-255. 285–297 (GSAPDIAGKNIAN) lines the NAD(+) pocket.

The protein belongs to the isocitrate and isopropylmalate dehydrogenases family. LeuB type 1 subfamily. Homodimer. It depends on Mg(2+) as a cofactor. The cofactor is Mn(2+).

The protein localises to the cytoplasm. It carries out the reaction (2R,3S)-3-isopropylmalate + NAD(+) = 4-methyl-2-oxopentanoate + CO2 + NADH. It participates in amino-acid biosynthesis; L-leucine biosynthesis; L-leucine from 3-methyl-2-oxobutanoate: step 3/4. With respect to regulation, requires K(+) ions for optimum activity. Its function is as follows. Catalyzes the oxidation of 3-carboxy-2-hydroxy-4-methylpentanoate (3-isopropylmalate) to 3-carboxy-4-methyl-2-oxopentanoate. The product decarboxylates to 4-methyl-2 oxopentanoate. The protein is 3-isopropylmalate dehydrogenase of Escherichia coli (strain K12).